The chain runs to 247 residues: Carboxy-S-adenosyl-L-methionine synthase (247 aa).

Residues Tyr-39, 64–66, 89–90, 117–118, Asn-132, and Arg-199 each bind S-adenosyl-L-methionine; these read GCS, DN, and DI.

Belongs to the class I-like SAM-binding methyltransferase superfamily. Cx-SAM synthase family. In terms of assembly, homodimer.

The enzyme catalyses prephenate + S-adenosyl-L-methionine = carboxy-S-adenosyl-L-methionine + 3-phenylpyruvate + H2O. Its function is as follows. Catalyzes the conversion of S-adenosyl-L-methionine (SAM) to carboxy-S-adenosyl-L-methionine (Cx-SAM). The polypeptide is Carboxy-S-adenosyl-L-methionine synthase (Escherichia coli (strain K12 / MC4100 / BW2952)).